A 348-amino-acid polypeptide reads, in one-letter code: Dihydroorotase (348 aa).

His-17 and His-19 together coordinate Zn(2+). Substrate is bound by residues 19–21 (HLR) and Asn-45. Zn(2+) is bound by residues Lys-103, His-140, and His-178. Position 103 is an N6-carboxylysine (Lys-103). Residue His-140 coordinates substrate. Leu-223 is a binding site for substrate. Asp-251 lines the Zn(2+) pocket. The active site involves Asp-251. Residues His-255 and Ala-267 each coordinate substrate.

The protein belongs to the metallo-dependent hydrolases superfamily. DHOase family. Class II DHOase subfamily. Homodimer. Zn(2+) serves as cofactor.

It carries out the reaction (S)-dihydroorotate + H2O = N-carbamoyl-L-aspartate + H(+). It functions in the pathway pyrimidine metabolism; UMP biosynthesis via de novo pathway; (S)-dihydroorotate from bicarbonate: step 3/3. Catalyzes the reversible cyclization of carbamoyl aspartate to dihydroorotate. This Salmonella paratyphi B (strain ATCC BAA-1250 / SPB7) protein is Dihydroorotase.